The chain runs to 134 residues: Large-conductance mechanosensitive channel (134 aa).

2 helical membrane passes run 16–36 and 81–101; these read VIDL…VTAL and GDFI…FIIV.

The protein belongs to the MscL family. Homopentamer.

It is found in the cell inner membrane. Functionally, channel that opens in response to stretch forces in the membrane lipid bilayer. May participate in the regulation of osmotic pressure changes within the cell. This is Large-conductance mechanosensitive channel from Xylella fastidiosa (strain Temecula1 / ATCC 700964).